Here is a 358-residue protein sequence, read N- to C-terminus: Phosphoserine aminotransferase (358 aa).

Arg-43 is a binding site for L-glutamate. Pyridoxal 5'-phosphate is bound by residues Trp-103, Thr-153, Asp-172, and Gln-195. Lys-196 is modified (N6-(pyridoxal phosphate)lysine). Position 236–237 (236–237 (NT)) interacts with pyridoxal 5'-phosphate.

It belongs to the class-V pyridoxal-phosphate-dependent aminotransferase family. SerC subfamily. As to quaternary structure, homodimer. Requires pyridoxal 5'-phosphate as cofactor.

It localises to the cytoplasm. It catalyses the reaction O-phospho-L-serine + 2-oxoglutarate = 3-phosphooxypyruvate + L-glutamate. The enzyme catalyses 4-(phosphooxy)-L-threonine + 2-oxoglutarate = (R)-3-hydroxy-2-oxo-4-phosphooxybutanoate + L-glutamate. The protein operates within amino-acid biosynthesis; L-serine biosynthesis; L-serine from 3-phospho-D-glycerate: step 2/3. It functions in the pathway cofactor biosynthesis; pyridoxine 5'-phosphate biosynthesis; pyridoxine 5'-phosphate from D-erythrose 4-phosphate: step 3/5. In terms of biological role, catalyzes the reversible conversion of 3-phosphohydroxypyruvate to phosphoserine and of 3-hydroxy-2-oxo-4-phosphonooxybutanoate to phosphohydroxythreonine. This is Phosphoserine aminotransferase from Dichelobacter nodosus (strain VCS1703A).